A 145-amino-acid chain; its full sequence is Methyl-coenzyme M reductase I operon protein D (145 aa).

In terms of assembly, MCR is composed of three subunits: alpha, beta, and gamma. The function of proteins C and D is not known.

In Methanothermobacter thermautotrophicus (strain ATCC 29096 / DSM 1053 / JCM 10044 / NBRC 100330 / Delta H) (Methanobacterium thermoautotrophicum), this protein is Methyl-coenzyme M reductase I operon protein D (mcrD).